The chain runs to 115 residues: Variant surface glycoprotein ANTAT 1.8 (115 aa).

A glycan (N-linked (GlcNAc...) asparagine) is linked at Asn42. Asp92 carries the GPI-anchor amidated aspartate lipid modification. The propeptide at 93 to 115 (SSILVNKQLALSVVSAAFAALLF) is removed in mature form.

It is found in the cell membrane. In terms of biological role, VSG forms a coat on the surface of the parasite. The trypanosome evades the immune response of the host by expressing a series of antigenically distinct VSGs from an estimated 1000 VSG genes. In Trypanosoma brucei brucei, this protein is Variant surface glycoprotein ANTAT 1.8.